The chain runs to 394 residues: D-mannose isomerase (394 aa).

Residues His251 and His380 each act as proton donor/acceptor in the active site.

This sequence belongs to the N-acylglucosamine 2-epimerase family. Monomer.

The catalysed reaction is D-mannose = D-fructose. It catalyses the reaction D-lyxose = D-xylulose. In terms of biological role, catalyzes the reversible isomerization of D-mannose to D-fructose. Can also isomerize D-lyxose, with lower efficiency. In longer reaction with a higher concentration of enzyme, it can isomerize 4-OH D-mannose derivatives (D-talose and 4-O-monosaccharyl-D-mannose). Cannot use D-glucose. This chain is D-mannose isomerase, found in Marinomonas mediterranea (strain ATCC 700492 / JCM 21426 / NBRC 103028 / MMB-1).